An 81-amino-acid chain; its full sequence is ATP synthase subunit c, chloroplastic (81 aa).

2 consecutive transmembrane segments (helical) span residues 3 to 23 (PLIA…ASIG) and 57 to 77 (LAFM…LLFA).

This sequence belongs to the ATPase C chain family. As to quaternary structure, F-type ATPases have 2 components, F(1) - the catalytic core - and F(0) - the membrane proton channel. F(1) has five subunits: alpha(3), beta(3), gamma(1), delta(1), epsilon(1). F(0) has four main subunits: a(1), b(1), b'(1) and c(10-14). The alpha and beta chains form an alternating ring which encloses part of the gamma chain. F(1) is attached to F(0) by a central stalk formed by the gamma and epsilon chains, while a peripheral stalk is formed by the delta, b and b' chains.

The protein localises to the plastid. It is found in the chloroplast thylakoid membrane. Functionally, f(1)F(0) ATP synthase produces ATP from ADP in the presence of a proton or sodium gradient. F-type ATPases consist of two structural domains, F(1) containing the extramembraneous catalytic core and F(0) containing the membrane proton channel, linked together by a central stalk and a peripheral stalk. During catalysis, ATP synthesis in the catalytic domain of F(1) is coupled via a rotary mechanism of the central stalk subunits to proton translocation. Its function is as follows. Key component of the F(0) channel; it plays a direct role in translocation across the membrane. A homomeric c-ring of between 10-14 subunits forms the central stalk rotor element with the F(1) delta and epsilon subunits. The protein is ATP synthase subunit c, chloroplastic of Chaetosphaeridium globosum (Charophycean green alga).